Consider the following 210-residue polypeptide: Floral homeotic protein FBP1 (210 aa).

An MADS-box domain is found at 3–57; that stretch reads RGKIEIKRIENSSNRQVTYSKRRNGILKKAKEISVLCDARVSVIIFASSGKMHEF. The K-box domain maps to 82–173; sequence HENLDNEINK…QLEIATMNRN (92 aa).

Petals.

It localises to the nucleus. Probable transcription factor. This is Floral homeotic protein FBP1 (FBP1) from Petunia hybrida (Petunia).